Consider the following 632-residue polypeptide: Bestrophin homolog 24 (632 aa).

The next 4 helical transmembrane spans lie at 28–48 (IWKAVILELAVWLVLYGILSV), 83–103 (GFFVTAVVNRWTYLYQIIGFI), 234–254 (IMYPQLVCLAVHTYFLVCLLA), and 271–291 (LYFPIMSTLQFIFYMGWMKVA). Disordered regions lie at residues 491-516 (LSNKRIDTSSSQPQLATGKRGSEHPF) and 562-632 (ETEV…TKFE). Positions 563-602 (TEVKRDEKKKKEEELREEGDNGKEEKDNKEDKKEEQDRPS) are enriched in basic and acidic residues. The segment covering 623–632 (PHLRPPTKFE) has biased composition (basic residues).

The protein belongs to the anion channel-forming bestrophin (TC 1.A.46) family. Calcium-sensitive chloride channel subfamily. As to quaternary structure, forms oligomers.

It localises to the cell membrane. In terms of biological role, forms chloride channels. The sequence is that of Bestrophin homolog 24 (best-24) from Caenorhabditis elegans.